Consider the following 187-residue polypeptide: ECF RNA polymerase sigma factor SigK (187 aa).

The interval 30–96 is sigma-70 factor domain-2; the sequence is YDHTKSRVYG…RAVDRVRCEQ (67 aa). Positions 53–56 match the Interaction with polymerase core subunit RpoC motif; sequence ETTQ. Residues 133 to 182 form a sigma-70 factor domain-4 region; sequence CLKALTDTQRQCIELAYYGGLTYVEVSRRLAANLSTIKSRMRDALRSLRN. Residues 155–174 constitute a DNA-binding region (H-T-H motif); that stretch reads YVEVSRRLAANLSTIKSRMR.

The protein belongs to the sigma-70 factor family. ECF subfamily. In terms of assembly, interacts transiently with the RNA polymerase catalytic core formed by RpoA, RpoB, RpoC and RpoZ (2 alpha, 1 beta, 1 beta' and 1 omega subunit) to form the RNA polymerase holoenzyme that can initiate transcription. Interacts (via sigma-70 factor domain 4) with anti-sigma-K factor RskA.

Its function is as follows. Sigma factors are initiation factors that promote the attachment of RNA polymerase to specific initiation sites and are then released. Extracytoplasmic function (ECF) sigma factors are held in an inactive form by an anti-sigma factor until released by regulated intramembrane proteolysis. This is ECF RNA polymerase sigma factor SigK (sigK) from Mycobacterium tuberculosis (strain ATCC 25177 / H37Ra).